The chain runs to 326 residues: Ribosomal large subunit pseudouridine synthase D (326 aa).

The 74-residue stretch at 18–91 (QRLDQALAEM…IPLDIVYEDE (74 aa)) folds into the S4 RNA-binding domain. Asp139 is an active-site residue.

Belongs to the pseudouridine synthase RluA family. In terms of assembly, in late stage pre-50S ribosomal subunit interacts with ObgE and DarP(YjgA).

Its subcellular location is the cytoplasm. It catalyses the reaction uridine(1911/1915/1917) in 23S rRNA = pseudouridine(1911/1915/1917) in 23S rRNA. Its function is as follows. Responsible for synthesis of pseudouridine from uracil at positions 1911, 1915 and 1917 in 23S ribosomal RNA. Other positions are not modified. Uridine isomerization occurs as a late step during the assembly of the large ribosomal subunit. Member of a network of 50S ribosomal subunit biogenesis factors (ObgE, RluD, RsfS and DarP(YjgA)) which assembles along the 30S-50S interface, allowing 23S rRNA modification and preventing incorrect 23S rRNA structures from forming. This is Ribosomal large subunit pseudouridine synthase D from Escherichia coli (strain K12).